A 335-amino-acid chain; its full sequence is UPF0284 protein TON_0688 (335 aa).

Belongs to the UPF0284 family.

The polypeptide is UPF0284 protein TON_0688 (Thermococcus onnurineus (strain NA1)).